The following is a 136-amino-acid chain: MARTKQTARKSTGGKAPRKQLATKAARKSAPASGGVKKPHRFRPGTVALREIRRFQKSTELLVRKLPFQRLVREIAQDFKSDLRFQSSAVLALQEAAEAYMVGLFEDTNLCAIHAKRVTIMPKDIQLARRIRGERT.

The disordered stretch occupies residues Met-1–Arg-43. Lys-5 bears the N6-methylated lysine mark. Lys-10 carries the post-translational modification N6-acetyllysine; alternate. Lys-10 is subject to N6-methylated lysine; alternate. Position 11 is a phosphoserine (Ser-11). Thr-12 carries the phosphothreonine modification. N6-acetyllysine is present on Lys-15. An N6-acetyllysine; alternate mark is found at Lys-19 and Lys-24. N6-methylated lysine; alternate occurs at positions 19 and 24. N6-methylated lysine is present on Lys-28. Ser-29 carries the phosphoserine modification. Lys-37 carries the N6-methylated lysine modification.

This sequence belongs to the histone H3 family. In terms of assembly, the nucleosome is a histone octamer containing two molecules each of H2A, H2B, H3 and H4 assembled in one H3-H4 heterotetramer and two H2A-H2B heterodimers. The octamer wraps approximately 147 bp of DNA. In terms of processing, acetylation is generally linked to gene activation. Can be acetylated to form H3K9ac, H3K14ac, H3K18ac and H3K23ac. H3K9ac could compete with H3K9me and prevent gene silencing. H3K9ac is restricted to euchromatin. Post-translationally, methylated to form mainly H3K4me, H3K9me, H3K18me, H3K23me, H3K27me and H3K36me. H3K4me1/2/3, H3K9me3, H3K27me3 and H3K36me1/2/3 are typical marks for euchromatin, whereas heterochromatic chromocenters are enriched in H3K9me1/2 and H3K27me1/2. H2BK143ub1 is probably prerequisite for H3K4me. Can be phosphorylated to form H3S10ph, H3T11ph and H3S28ph.

The protein resides in the nucleus. It localises to the chromosome. In terms of biological role, core component of nucleosome. Nucleosomes wrap and compact DNA into chromatin, limiting DNA accessibility to the cellular machineries which require DNA as a template. Histones thereby play a central role in transcription regulation, DNA repair, DNA replication and chromosomal stability. DNA accessibility is regulated via a complex set of post-translational modifications of histones, also called histone code, and nucleosome remodeling. The sequence is that of Histone H3 from Griffithsia japonica (Red alga).